Here is a 428-residue protein sequence, read N- to C-terminus: MRRLYQTVCTLALLLVGLQAAHADDIIDVIGGQEGAMPVAVIPFAVTGEIPTPDQDIARVISDNLARSGRFEVLPREELVARPAGLDDTRFSAWRALGMDYLVTGRMEMDGHRVSVTFELLDVFRGNRIEGRRYRLHPDNLRSLAHAISDIVFEEVVGLPGVFGTQIAYVQVEERNDQRIHRLMVADADGQRPREILESRQPIMSPAWSPERDRLAYVSFEGGRSEIYVQNLRSGQRDRIASFRGINSAPAWSPDGRHLAVTLSRDGRANIYLLRLDDGHVRRLTDHWAIDTEPTFSPDGERIAFTSDRGGRPQVYTLAVNGPGGVERVTFDGDYNARPNWSPDGRRIAMVHRHNGSFRIAVHDLESDRTRVLTDGPWDESPVFAPNGDMIMYSAGGSGDSRLRTVSVHGRANQALPRAGGLTREPAW.

The N-terminal stretch at 1-23 is a signal peptide; that stretch reads MRRLYQTVCTLALLLVGLQAAHA.

It belongs to the TolB family. As to quaternary structure, the Tol-Pal system is composed of five core proteins: the inner membrane proteins TolA, TolQ and TolR, the periplasmic protein TolB and the outer membrane protein Pal. They form a network linking the inner and outer membranes and the peptidoglycan layer.

Its subcellular location is the periplasm. Its function is as follows. Part of the Tol-Pal system, which plays a role in outer membrane invagination during cell division and is important for maintaining outer membrane integrity. The protein is Tol-Pal system protein TolB of Alkalilimnicola ehrlichii (strain ATCC BAA-1101 / DSM 17681 / MLHE-1).